The following is a 775-amino-acid chain: Hepatocyte growth factor-regulated tyrosine kinase substrate (775 aa).

Residues 15–143 (ATSQLLLETD…IMKVEGHVFP (129 aa)) enclose the VHS domain. An FYVE-type zinc finger spans residues 160–220 (WVDAEECHRC…VCEPCYEQLN (61 aa)). Residues C166, C169, C182, C185, C190, and C193 each contribute to the Zn(2+) site. K207 is subject to N6-acetyllysine. Zn(2+) contacts are provided by C212 and C215. Phosphotyrosine is present on Y216. Positions 223–319 (AEGKASSTTE…SPVNSSAPLA (97 aa)) are disordered. Residues 225–541 (GKASSTTELP…QRLQEQEKER (317 aa)) are interaction with SNX1. Residues 258–277 (QEEEELQLALALSQSEAEEK) form the UIM domain. Positions 307-316 (LYSSPVNSSA) are enriched in polar residues. Phosphotyrosine is present on residues Y308, Y329, and Y334. The tract at residues 338–405 (KQEEARKSPT…NGESEESHEQ (68 aa)) is disordered. Residues 443-541 (SINTMHPQLL…QRLQEQEKER (99 aa)) form an interaction with SNAP25 and TRAK2 region. The tract at residues 452–570 (LELLNQLDER…FPLPYAQLQA (119 aa)) is interaction with STAM. An interaction with NF2 region spans residues 478 to 775 (ARGALSALRE…GSEAQLISFD (298 aa)). K549 carries the post-translational modification N6-succinyllysine. Low complexity predominate over residues 640–657 (PGAQAAPQAQAGPTTSPA). 2 disordered regions span residues 640-690 (PGAQ…PQTS) and 719-775 (QDAS…ISFD). The segment covering 658 to 690 (YSSYQPTPTPGYQSVASQAPQSLPAISQPPQTS) has biased composition (polar residues). A compositionally biased stretch (pro residues) spans 744–761 (TGPPQQQPPVAQPAPTQG).

In terms of assembly, component of the ESCRT-0 complex composed of STAM or STAM2 and HGS. Part of a complex at least composed of HSG, STAM2 (or probably STAM) and EPS15. Interacts with STAM. Interacts with STAM2. Interacts with EPS15; the interaction is direct, calcium-dependent and inhibited by SNAP25. Identified in a complex with STAM and LITAF. Found in a complex with STAM and E3 ligase ITCH and DTX3L. Interacts with E3 ligase DTX3L; the interaction brings together STAM and HSG, promotes their recruitment to early endosomes and decreases STAM and HGS ubiquitination by ITCH. Interacts with NF2; the interaction is direct. Interacts with ubiquitin; the interaction is direct. Interacts with VPS37C. Interacts with SMAD1, SMAD2 and SMAD3. Interacts with TSG101; the interaction mediates the association with the ESCRT-I complex. Interacts with SNAP25; the interaction is direct and decreases with addition of increasing concentrations of free calcium. Interacts with SNX1; the interaction is direct. Component of a 550 kDa membrane complex at least composed of HGS and SNX1 but excluding EGFR. Interacts with TRAK1. Interacts with TRAK2. Component of the CART complex, at least composed of ACTN4, HGS/HRS, MYO5B and TRIM3. Interacts with ARRDC3. Identified in a complex containing at least ARRDC4, AVPR2 and HGS. Interacts (via UIM domain) with UBQLN1 (via ubiquitin-like domain). Interacts with LAPTM4B; promotes HGS ubiquitination. Post-translationally, phosphorylated on Tyr-334. This phosphorylation occurs in response to EGF. A minor site of phosphorylation on Tyr-329 is detected. Protein phosphorylation may also be triggered in response to IL-2, GM-CSF and HGF. In terms of processing, ubiquitinated by ITCH. In terms of tissue distribution, ubiquitous expression in adult and fetal tissues with higher expression in testis.

It localises to the cytoplasm. Its subcellular location is the early endosome membrane. The protein resides in the endosome. It is found in the multivesicular body membrane. Involved in intracellular signal transduction mediated by cytokines and growth factors. When associated with STAM, it suppresses DNA signaling upon stimulation by IL-2 and GM-CSF. Could be a direct effector of PI3-kinase in vesicular pathway via early endosomes and may regulate trafficking to early and late endosomes by recruiting clathrin. May concentrate ubiquitinated receptors within clathrin-coated regions. Involved in down-regulation of receptor tyrosine kinase via multivesicular body (MVBs) when complexed with STAM (ESCRT-0 complex). The ESCRT-0 complex binds ubiquitin and acts as a sorting machinery that recognizes ubiquitinated receptors and transfers them to further sequential lysosomal sorting/trafficking processes. May contribute to the efficient recruitment of SMADs to the activin receptor complex. Involved in receptor recycling via its association with the CART complex, a multiprotein complex required for efficient transferrin receptor recycling but not for EGFR degradation. This is Hepatocyte growth factor-regulated tyrosine kinase substrate (Hgs) from Mus musculus (Mouse).